The following is a 126-amino-acid chain: Large ribosomal subunit protein bL12 (126 aa).

This sequence belongs to the bacterial ribosomal protein bL12 family. As to quaternary structure, homodimer. Part of the ribosomal stalk of the 50S ribosomal subunit. Forms a multimeric L10(L12)X complex, where L10 forms an elongated spine to which 2 to 4 L12 dimers bind in a sequential fashion. Binds GTP-bound translation factors.

Forms part of the ribosomal stalk which helps the ribosome interact with GTP-bound translation factors. Is thus essential for accurate translation. In Acidobacterium capsulatum (strain ATCC 51196 / DSM 11244 / BCRC 80197 / JCM 7670 / NBRC 15755 / NCIMB 13165 / 161), this protein is Large ribosomal subunit protein bL12.